An 88-amino-acid polypeptide reads, in one-letter code: Small ribosomal subunit protein uS17 (88 aa).

It belongs to the universal ribosomal protein uS17 family. As to quaternary structure, part of the 30S ribosomal subunit.

Its function is as follows. One of the primary rRNA binding proteins, it binds specifically to the 5'-end of 16S ribosomal RNA. This chain is Small ribosomal subunit protein uS17, found in Helicobacter hepaticus (strain ATCC 51449 / 3B1).